The sequence spans 1127 residues: Testis-expressed protein 2 (1127 aa).

Disordered stretches follow at residues 1-27 (MTSL…HVQR) and 133-279 (AVSP…SFFK). Residues 133 to 187 (AVSPGSSSSGPLASSPSVSSLSEQKTSSSSPLSSPSKSPILSSSASTSTLSSAKP) show a composition bias toward low complexity. Serine 196 is subject to Phosphoserine. Residues 249 to 275 (QFTQPRNTGGDSKTAPSSPLTSPSDTR) show a composition bias toward polar residues. Threonine 262 is subject to Phosphothreonine. 4 positions are modified to phosphoserine: serine 265, serine 266, serine 270, and serine 295. Asparagine 330 carries N-linked (GlcNAc...) asparagine glycosylation. The disordered stretch occupies residues 348 to 386 (EEECDSEGDGYGSDSNIPRSDHPKSTGEPTREIELKSSQ). Positions 366–382 (RSDHPKSTGEPTREIEL) are enriched in basic and acidic residues. 2 consecutive transmembrane segments (helical) span residues 475-495 (TLGF…PHYV) and 497-517 (GLFL…WFFT). 4 disordered regions span residues 648–685 (KAQT…QRDQ), 715–764 (KKSS…QKEL), 786–816 (QESR…PPSE), and 947–980 (DEES…GYVG). Positions 650-670 (QTDKETSEEKPPAEGSEDPKK) are enriched in basic and acidic residues. Phosphoserine occurs at positions 732, 738, 744, 748, 751, 798, and 815. Polar residues predominate over residues 735-750 (NSPSGHLTHSRSSSKG). Positions 787-804 (ESRSPQRSPLQSAESSPT) are enriched in polar residues. The 286-residue stretch at 816–1101 (EEEEQEAWVN…MPNMDDVYIT (286 aa)) folds into the SMP-LTD domain. Positions 947–962 (DEESSSAGSSEEDDAP) are enriched in acidic residues.

The protein resides in the endoplasmic reticulum membrane. It is found in the nucleus membrane. During endoplasmic reticulum (ER) stress or when cellular ceramide levels increase, may induce contacts between the ER and medial-Golgi complex to facilitate non-vesicular transport of ceramides from the ER to the Golgi complex where they are converted to complex sphingolipids, preventing toxic ceramide accumulation. The protein is Testis-expressed protein 2 (TEX2) of Homo sapiens (Human).